The chain runs to 296 residues: NAD kinase (296 aa).

D72 serves as the catalytic Proton acceptor. Residues 72–73 (DG), 146–147 (ND), R157, K174, D176, 187–192 (TAYALS), and Q247 contribute to the NAD(+) site.

The protein belongs to the NAD kinase family. The cofactor is a divalent metal cation.

The protein localises to the cytoplasm. The catalysed reaction is NAD(+) + ATP = ADP + NADP(+) + H(+). Functionally, involved in the regulation of the intracellular balance of NAD and NADP, and is a key enzyme in the biosynthesis of NADP. Catalyzes specifically the phosphorylation on 2'-hydroxyl of the adenosine moiety of NAD to yield NADP. In Pseudomonas savastanoi pv. phaseolicola (strain 1448A / Race 6) (Pseudomonas syringae pv. phaseolicola (strain 1448A / Race 6)), this protein is NAD kinase.